Reading from the N-terminus, the 130-residue chain is Small ribosomal subunit protein uS11 (130 aa).

The protein belongs to the universal ribosomal protein uS11 family. In terms of assembly, part of the 30S ribosomal subunit. Interacts with proteins S7 and S18. Binds to IF-3.

Functionally, located on the platform of the 30S subunit, it bridges several disparate RNA helices of the 16S rRNA. Forms part of the Shine-Dalgarno cleft in the 70S ribosome. The chain is Small ribosomal subunit protein uS11 from Prochlorococcus marinus (strain MIT 9515).